Here is a 118-residue protein sequence, read N- to C-terminus: MEMKNMVVGLFLIAAFALPALATSFEKDFITHETVQAILKKVGPSSNGMLDEQAISALTGKTIISNPVLEEALLTHSNSINALGGTLPCGESCVWIPCISAVVGCSCKSKVCYKNSLA.

A signal peptide spans 1-22 (MEMKNMVVGLFLIAAFALPALA). Residues 23 to 84 (TSFEKDFITH…THSNSINALG (62 aa)) constitute a propeptide that is removed on maturation. The segment at residues 85-115 (GTLPCGESCVWIPCISAVVGCSCKSKVCYKN) is a cross-link (cyclopeptide (Gly-Asn)). Cystine bridges form between cysteine 89-cysteine 105, cysteine 93-cysteine 107, and cysteine 98-cysteine 112. Residues 116 to 118 (SLA) constitute a propeptide that is removed on maturation.

Cycloviolacin-O11 is a cyclic peptide. In terms of tissue distribution, expressed in leaves, petals and petioles but not in roots and runners (at protein level).

In terms of biological role, probably participates in a plant defense mechanism. This Viola odorata (Sweet violet) protein is Cycloviolacin-O11 (Voc2).